A 326-amino-acid polypeptide reads, in one-letter code: Neuferricin homolog (326 aa).

A signal peptide spans 1–34 (MEKNRRKKDDAGVMTKTLAGVAALTFLVSFICSS). The Cytochrome b5 heme-binding domain occupies 98 to 197 (KHVFTPEQLH…KEYPLVGVVA (100 aa)).

Belongs to the cytochrome b5 family. MAPR subfamily.

The protein resides in the secreted. Functionally, heme-binding protein. This Caenorhabditis briggsae protein is Neuferricin homolog.